Here is a 591-residue protein sequence, read N- to C-terminus: MEQSNDGQTAHTLLHLASAEVESLKEGITFLRNKESGKNFIIYKNGEELRACKNLCKHQGGTFIKDIEDLGNRTVRCTKHNWKLDVSSMKYVNPPDSFCQDELVIENDDENGVSLVELSPPNPWDSDPRMAVCLEGGEVQVTYLTHACMDLKLGNKHMVFDPWLIGPAFARGWWLLHEPPCDWLERLCRADLIYISHMHSDHLSYPTLKKLSEKRPDIPIYVGKTERPVFWYLDKSGVKLTNINVVPFGIWQEVDENLRFMILMDGVHPEMDTCIIVEYKGNKILNTVDCTRPNGGKLPTNVALMMSDFAGGASGFPMTFSGGKFTEEWKSQFIKTERKKLLNYKAQLVKDLNPRIYCPFAGYFVEEHPSDKYIKETNLKNDAAELNMLIRNTSDVVTWTPKPGAILDLGRLLIDPTDKNGIIDPPPGTKIFKDSWDYDTYLSIHSFSFDDEIFHYPSWIKEYFTWAGFKGYNLVLRMIETDEHFVPLPKGYNYLVDFLDLSFPTERPERDHPYEEISSRATVIRHVVKHGLLWDDLYIGFQTRIQRNPDIYHHQFWNHFQIKLPLTPPDWKVFLDREKENNATLQNCSIM.

One can recognise a Rieske domain in the interval 16-114 (LASAEVESLK…IENDDENGVS (99 aa)). The [2Fe-2S] cluster site is built by C56, H58, C77, and H80.

The protein belongs to the CMP-Neu5Ac hydroxylase family. [2Fe-2S] cluster serves as cofactor.

It localises to the cytoplasm. The enzyme catalyses CMP-N-acetyl-beta-neuraminate + 2 Fe(II)-[cytochrome b5] + O2 + 2 H(+) = CMP-N-glycoloyl-beta-neuraminate + 2 Fe(III)-[cytochrome b5] + H2O. The protein operates within amino-sugar metabolism; N-acetylneuraminate metabolism. Sialic acids are components of carbohydrate chains of glycoconjugates and are involved in cell-cell recognition and cell-pathogen interactions. Catalyzes the conversion of CMP-N-acetylneuraminic acid (CMP-Neu5Ac) into its hydroxylated derivative CMP-N-glycolylneuraminic acid (CMP-Neu5Gc), a sialic acid abundantly expressed at the surface of many cells. The protein is Cytidine monophosphate-N-acetylneuraminic acid hydroxylase (cmah) of Xenopus laevis (African clawed frog).